The sequence spans 449 residues: C4-dicarboxylate transport protein 1 (449 aa).

The next 9 helical transmembrane spans lie at 14–34, 47–67, 83–103, 157–177, 195–215, 226–246, 312–332, 359–379, and 385–405; these read SIFL…VGIP, FIKL…VNGI, SVIY…VVAY, ILQV…VGEQ, IMGM…AFTT, LGAL…AVLG, FSIY…TPLA, VILA…LVLV, and FMGI…TVTI.

The protein belongs to the dicarboxylate/amino acid:cation symporter (DAACS) (TC 2.A.23) family.

It is found in the cell inner membrane. Responsible for the transport of dicarboxylates such as succinate, fumarate, and malate from the periplasm across the membrane. This Pseudomonas aeruginosa (strain UCBPP-PA14) protein is C4-dicarboxylate transport protein 1.